The following is a 399-amino-acid chain: Tryptophan synthase beta chain (399 aa).

Position 86 is an N6-(pyridoxal phosphate)lysine (lysine 86).

This sequence belongs to the TrpB family. In terms of assembly, tetramer of two alpha and two beta chains. Pyridoxal 5'-phosphate is required as a cofactor.

The catalysed reaction is (1S,2R)-1-C-(indol-3-yl)glycerol 3-phosphate + L-serine = D-glyceraldehyde 3-phosphate + L-tryptophan + H2O. The protein operates within amino-acid biosynthesis; L-tryptophan biosynthesis; L-tryptophan from chorismate: step 5/5. Functionally, the beta subunit is responsible for the synthesis of L-tryptophan from indole and L-serine. This chain is Tryptophan synthase beta chain (trpB), found in Buchnera aphidicola subsp. Schizaphis graminum (strain Sg).